Consider the following 66-residue polypeptide: Alpha-conotoxin GID (66 aa).

A signal peptide spans 1-21; sequence MGMRMMFTVFLLVVLAATIVS. A propeptide spanning residues 22-44 is cleaved from the precursor; that stretch reads FTSDRASDGRNVAAKAFHRIGRT. An N-terminal tail important for activity on alpha-3-beta-2/CHRNA3-CHRNB2 and alpha-4-beta-2/CHRNA4-CHRNB2 nAChR region spans residues 45-48; sequence IRDE. Glu-48 bears the 4-carboxyglutamate mark. 2 cysteine pairs are disulfide-bonded: Cys-49/Cys-55 and Cys-50/Cys-63. The segment at 51–53 is ser-Xaa-Pro motif, crucial for potent interaction with nAChR; the sequence is SNP. At Pro-60 the chain carries 4-hydroxyproline.

This sequence belongs to the conotoxin A superfamily. Gamma-carboxyglutamation of Glu-48 seems to be not important for nAChR inhibition, since synthetic peptides without this modification do not show change in inhibition of alpha-7/CHRNA7 and alpha-3-beta-2/CHRNA3-CHRNB2 nAChR and show a 2.3-fold increase in inhibition of alpha-4-beta-2/CHRNA4-CHRNB2 nAChR. Post-translationally, hydroxylation of Pro-60 seems to be important for nAChR inhibition, since synthetic peptides without this modification show a small decrease in inhibition of alpha-7/CHRNA7 and alpha-3-beta-2/CHRNA3-CHRNB2 nAChR and a very important decrease in inhibition of alpha-4-beta-2/CHRNA4-CHRNB2 nAChR. In terms of processing, an amidation of Cys-63 increases potency against alpha-7/CHRNA7 (2.6-fold) and alpha-3-beta-2/CHRNA3-CHRNB2 (2-fold) nAChR. On the other hand, the peptide has no more activity on alpha-4-beta-2/CHRNA4-CHRNB2 nAChR with an amidated Cys-63. In terms of tissue distribution, expressed by the venom duct.

Its subcellular location is the secreted. Functionally, alpha-conotoxins act on postsynaptic membranes, they bind to the nicotinic acetylcholine receptors (nAChR) and thus inhibit them. This toxin reversibly blocks alpha-3-beta-2/CHRNA3-CHRNB2 (IC(50)=3.1-5.1 nM), alpha-7/CHRNA7 (IC(50)=4.5-5.1 nM), and alpha-4-beta-2/CHRNA4-CHRNB2 (IC(50)=128.6-390 nM) nAChRs. This is Alpha-conotoxin GID from Conus geographus (Geography cone).